We begin with the raw amino-acid sequence, 526 residues long: Importin subunit alpha-1a (526 aa).

Residues 1 to 58 (MSLRPSERVEVRRNRYKVAVDAEEGRRRREDNMVEIRKSRREESLLKKRREGLQAQAP) enclose the IBB domain. ARM repeat units lie at residues 105–145 (SPPI…NIAS), 148–187 (SENT…NVAG), 190–230 (PKCR…NFCR), 232–271 (KPQP…YLSD), 274–313 (NDKI…NIVT), 316–356 (DAQT…NITA), 359–398 (KDQI…NATS), and 402–441 (HDQI…NILK).

This sequence belongs to the importin alpha family. In terms of assembly, forms a complex with importin subunit beta-1. The whole complex, most stable and composed of importin alpha, importin beta and NLS substrate, is referred to as PTAC or pore targeting complex. Interacts with mungbean yellow mosaic virus capsid protein. Highly expressed in callus, followed by root and etiolated leaf. Low expression in green leaf.

Its subcellular location is the cytoplasm. The protein localises to the perinuclear region. Functionally, functions in nuclear protein import. Binds specifically and directly to substrates containing either a simple or bipartite NLS motif. Promotes docking of import substrates to the nuclear envelope. The chain is Importin subunit alpha-1a from Oryza sativa subsp. japonica (Rice).